Consider the following 132-residue polypeptide: MSVSDPLGDMLTRIRNAVGRKKTKVSTPASKLRARVLDVLQAEGYIRAYTQSEFENGKAEIEIELKYYEGVPVIREITRVSKPGRRVYVSVKSIPQVANGLGISILSTPKGVMADHEAREQNVGGELLCRIF.

Belongs to the universal ribosomal protein uS8 family. As to quaternary structure, part of the 30S ribosomal subunit. Contacts proteins S5 and S12.

In terms of biological role, one of the primary rRNA binding proteins, it binds directly to 16S rRNA central domain where it helps coordinate assembly of the platform of the 30S subunit. In Brucella abortus (strain S19), this protein is Small ribosomal subunit protein uS8.